A 513-amino-acid polypeptide reads, in one-letter code: Ribonuclease Y (513 aa).

Residues 6 to 26 (YIIIAVVIIIICVILGLYVVD) form a helical membrane-spanning segment. The region spanning 203–288 (TVHVVNLPND…EMVEKAKKEV (86 aa)) is the KH domain. The HD domain occupies 329 to 422 (VLKHSIEVSH…VQAADAISAA (94 aa)).

It belongs to the RNase Y family.

The protein resides in the cell membrane. In terms of biological role, endoribonuclease that initiates mRNA decay. This chain is Ribonuclease Y, found in Clostridium botulinum (strain Langeland / NCTC 10281 / Type F).